The following is a 319-amino-acid chain: Tyrosine--tRNA ligase (319 aa).

Tyrosine 40 is an L-tyrosine binding site. Residues 45-53 carry the 'HIGH' region motif; it reads PSGRIHMGH. 4 residues coordinate L-tyrosine: tyrosine 159, glutamine 163, aspartate 166, and glutamine 181. Positions 216 to 220 match the 'KMSKS' region motif; it reads KMSSS. Serine 219 serves as a coordination point for ATP.

It belongs to the class-I aminoacyl-tRNA synthetase family. TyrS type 3 subfamily. As to quaternary structure, homodimer.

It localises to the cytoplasm. It carries out the reaction tRNA(Tyr) + L-tyrosine + ATP = L-tyrosyl-tRNA(Tyr) + AMP + diphosphate + H(+). Functionally, catalyzes the attachment of tyrosine to tRNA(Tyr) in a two-step reaction: tyrosine is first activated by ATP to form Tyr-AMP and then transferred to the acceptor end of tRNA(Tyr). The chain is Tyrosine--tRNA ligase from Methanococcus maripaludis (strain DSM 14266 / JCM 13030 / NBRC 101832 / S2 / LL).